We begin with the raw amino-acid sequence, 135 residues long: Lymphocyte antigen 6 complex locus protein G6d (135 aa).

A signal peptide spans 1–19 (MNSQLVGILLSALLGVALG). In terms of domain architecture, UPAR/Ly6 spans 22–121 (TRCYDCGGGP…ASSVTPLCIL (100 aa)). Intrachain disulfides connect Cys-24–Cys-48, Cys-27–Cys-35, Cys-42–Cys-76, Cys-82–Cys-101, and Cys-102–Cys-107. Thr-68 carries O-linked (GalNAc...) threonine glycosylation. A lipid anchor (GPI-anchor amidated asparagine) is attached at Asn-108. Residues 109–135 (SAVASSVTPLCILAAAVTTLAWLLPGL) constitute a propeptide, removed in mature form.

As to quaternary structure, homodimer. Post-translationally, O-glycosylated. In terms of tissue distribution, expressed in embryonic tissue and adult lung, kidney, brain, liver and spleen.

It is found in the cell membrane. It localises to the cell projection. Its subcellular location is the filopodium. The polypeptide is Lymphocyte antigen 6 complex locus protein G6d (Ly6g6d) (Mus musculus (Mouse)).